Reading from the N-terminus, the 88-residue chain is Large ribosomal subunit protein eL37A (88 aa).

4 residues coordinate Zn(2+): cysteine 19, cysteine 22, cysteine 34, and cysteine 37. The segment at 19–37 (CNRCGRRSFHVQKKTCSSC) adopts a C4-type zinc-finger fold.

It belongs to the eukaryotic ribosomal protein eL37 family. In terms of assembly, component of the large ribosomal subunit (LSU). Mature yeast ribosomes consist of a small (40S) and a large (60S) subunit. The 40S small subunit contains 1 molecule of ribosomal RNA (18S rRNA) and 33 different proteins (encoded by 57 genes). The large 60S subunit contains 3 rRNA molecules (25S, 5.8S and 5S rRNA) and 46 different proteins (encoded by 81 genes). It depends on Zn(2+) as a cofactor.

The protein resides in the cytoplasm. In terms of biological role, component of the ribosome, a large ribonucleoprotein complex responsible for the synthesis of proteins in the cell. The small ribosomal subunit (SSU) binds messenger RNAs (mRNAs) and translates the encoded message by selecting cognate aminoacyl-transfer RNA (tRNA) molecules. The large subunit (LSU) contains the ribosomal catalytic site termed the peptidyl transferase center (PTC), which catalyzes the formation of peptide bonds, thereby polymerizing the amino acids delivered by tRNAs into a polypeptide chain. The nascent polypeptides leave the ribosome through a tunnel in the LSU and interact with protein factors that function in enzymatic processing, targeting, and the membrane insertion of nascent chains at the exit of the ribosomal tunnel. The polypeptide is Large ribosomal subunit protein eL37A (Saccharomyces cerevisiae (strain ATCC 204508 / S288c) (Baker's yeast)).